A 100-amino-acid chain; its full sequence is Phosphoribosylformylglycinamidine synthase subunit PurS (100 aa).

It belongs to the PurS family. As to quaternary structure, homodimer. Part of the FGAM synthase complex composed of 1 PurL, 1 PurQ and 2 PurS subunits.

The protein localises to the cytoplasm. The enzyme catalyses N(2)-formyl-N(1)-(5-phospho-beta-D-ribosyl)glycinamide + L-glutamine + ATP + H2O = 2-formamido-N(1)-(5-O-phospho-beta-D-ribosyl)acetamidine + L-glutamate + ADP + phosphate + H(+). The protein operates within purine metabolism; IMP biosynthesis via de novo pathway; 5-amino-1-(5-phospho-D-ribosyl)imidazole from N(2)-formyl-N(1)-(5-phospho-D-ribosyl)glycinamide: step 1/2. Functionally, part of the phosphoribosylformylglycinamidine synthase complex involved in the purines biosynthetic pathway. Catalyzes the ATP-dependent conversion of formylglycinamide ribonucleotide (FGAR) and glutamine to yield formylglycinamidine ribonucleotide (FGAM) and glutamate. The FGAM synthase complex is composed of three subunits. PurQ produces an ammonia molecule by converting glutamine to glutamate. PurL transfers the ammonia molecule to FGAR to form FGAM in an ATP-dependent manner. PurS interacts with PurQ and PurL and is thought to assist in the transfer of the ammonia molecule from PurQ to PurL. The protein is Phosphoribosylformylglycinamidine synthase subunit PurS of Synechocystis sp. (strain ATCC 27184 / PCC 6803 / Kazusa).